We begin with the raw amino-acid sequence, 205 residues long: MQAPPSFYEGDTLEVAKKLLGQKLVHIVDGIKRSGIIVEVEAYKGPDDKAAHSYGGRRTDRTEVMFGAPGHAYVYLIYGMYHCFNVITAPVGTPQGVLIRALEPVDGIAEIKLARYNKTEITKAQYKNLTNGPGKLCRALGITLKERGVSLQNDTLHIELVPKEEHISSQYKITAGPRINIDYAEEAVHYPWRFYYEGHPFVSKK.

This sequence belongs to the DNA glycosylase MPG family.

The protein is Putative 3-methyladenine DNA glycosylase of Bacillus cereus (strain B4264).